A 135-amino-acid chain; its full sequence is ATP synthase epsilon chain (135 aa).

Belongs to the ATPase epsilon chain family. As to quaternary structure, F-type ATPases have 2 components, CF(1) - the catalytic core - and CF(0) - the membrane proton channel. CF(1) has five subunits: alpha(3), beta(3), gamma(1), delta(1), epsilon(1). CF(0) has three main subunits: a, b and c.

It is found in the cell inner membrane. In terms of biological role, produces ATP from ADP in the presence of a proton gradient across the membrane. This is ATP synthase epsilon chain from Rhizobium rhizogenes (strain K84 / ATCC BAA-868) (Agrobacterium radiobacter).